The sequence spans 127 residues: Aspartate 1-decarboxylase (127 aa).

S25 functions as the Schiff-base intermediate with substrate; via pyruvic acid in the catalytic mechanism. Position 25 is a pyruvic acid (Ser) (S25). T57 is a binding site for substrate. Residue Y58 is the Proton donor of the active site. A substrate-binding site is contributed by 73–75 (GAA).

This sequence belongs to the PanD family. In terms of assembly, heterooctamer of four alpha and four beta subunits. It depends on pyruvate as a cofactor. Is synthesized initially as an inactive proenzyme, which is activated by self-cleavage at a specific serine bond to produce a beta-subunit with a hydroxyl group at its C-terminus and an alpha-subunit with a pyruvoyl group at its N-terminus.

The protein localises to the cytoplasm. It catalyses the reaction L-aspartate + H(+) = beta-alanine + CO2. Its pathway is cofactor biosynthesis; (R)-pantothenate biosynthesis; beta-alanine from L-aspartate: step 1/1. Catalyzes the pyruvoyl-dependent decarboxylation of aspartate to produce beta-alanine. This Bacillus cereus (strain G9842) protein is Aspartate 1-decarboxylase.